The chain runs to 340 residues: Adenosine kinase (340 aa).

Asp-292 is a catalytic residue.

This sequence belongs to the carbohydrate kinase PfkB family. Mg(2+) is required as a cofactor.

It catalyses the reaction adenosine + ATP = AMP + ADP + H(+). The protein operates within purine metabolism; AMP biosynthesis via salvage pathway; AMP from adenosine: step 1/1. The sequence is that of Adenosine kinase (ado1) from Schizosaccharomyces pombe (strain 972 / ATCC 24843) (Fission yeast).